The chain runs to 180 residues: Putative adenylate kinase (180 aa).

ATP is bound by residues G10, G12, K13, T14, and T15. The segment at 30-50 is NMP; sequence NLRDFALEKGCGREVDGEVEV. The tract at residues 99–109 is LID; it reads ERGYSKEKIGE. Residues R100 and K138 each coordinate ATP.

It belongs to the adenylate kinase family. AK6 subfamily. As to quaternary structure, interacts with uS11. Not a structural component of 40S pre-ribosomes, but transiently interacts with them by binding to uS11.

It carries out the reaction AMP + ATP = 2 ADP. It catalyses the reaction ATP + H2O = ADP + phosphate + H(+). In terms of biological role, broad-specificity nucleoside monophosphate (NMP) kinase that catalyzes the reversible transfer of the terminal phosphate group between nucleoside triphosphates and monophosphates. Also has ATPase activity. Involved in the late maturation steps of the 30S ribosomal particles, specifically 16S rRNA maturation. While NMP activity is not required for ribosome maturation, ATPase activity is. Associates transiently with small ribosomal subunit protein uS11. ATP hydrolysis breaks the interaction with uS11. May temporarily remove uS11 from the ribosome to enable a conformational change of the ribosomal RNA that is needed for the final maturation step of the small ribosomal subunit. The polypeptide is Putative adenylate kinase (Pyrococcus abyssi (strain GE5 / Orsay)).